Here is a 139-residue protein sequence, read N- to C-terminus: Low molecular weight protein-tyrosine-phosphatase PtpB (139 aa).

Cys-7 functions as the Nucleophile in the catalytic mechanism. Arg-13 is an active-site residue. Asp-111 functions as the Proton donor in the catalytic mechanism.

The protein belongs to the low molecular weight phosphotyrosine protein phosphatase family.

It carries out the reaction O-phospho-L-tyrosyl-[protein] + H2O = L-tyrosyl-[protein] + phosphate. Functionally, dephosphorylates the phosphotyrosine-containing proteins. The chain is Low molecular weight protein-tyrosine-phosphatase PtpB (ptpB) from Staphylococcus epidermidis (strain ATCC 35984 / DSM 28319 / BCRC 17069 / CCUG 31568 / BM 3577 / RP62A).